The sequence spans 437 residues: MNPLKIFCFLALVIAVASANKHGKNKDNAGPNSLKPTDWLSVEELQSMTAIDDITLQQLENMSVEDAERKIEKIYHLSQINHALEPSYVPSPSNVPVMLMKPNGQSQQTNHNELVEAAKQQPNFGDEEVTIFITGMPQTSSAVLKANKKLVQAYMQRYNGQQQPINGNKDYDYGSSQGNQGATSSEEDYSESWKNQKSTKGNLVIINLGSTLTNMKRFALLDVEQTGNMIGKTLVQLTNEVDVPQEIIHIVAQCIGAQVAGAAGRQYKRLTGHQLRRITALDPSKIFAKNRNALTGLARGDADFVDAIHTSTCGMGTRQRVGDVDFYVNGPASTAPGTNNVVEASMRATRYFAESLRPGNERNFPAVAANSLNQYENNEGNGKRAYMGIATDFDLEGDYILKVNPKSPFGKSAPAQKQRRYHGLHQSWKSGKNQNQE.

An N-terminal signal peptide occupies residues 1-19; that stretch reads MNPLKIFCFLALVIAVASA. Disordered stretches follow at residues 161–194 and 405–437; these read QQQP…ESWK and PKSP…QNQE. Composition is skewed to polar residues over residues 174-184 and 427-437; these read GSSQGNQGATS and SWKSGKNQNQE.

The protein belongs to the AB hydrolase superfamily. Lipase family. As to expression, synthesized in the fat body and ovarian follicle cells and accumulate in the oocyte.

The protein localises to the secreted. Functionally, vitellogenin is the major yolk protein of eggs where it is used as a food source during embryogenesis. The sequence is that of Vitellogenin-1 (VG1-GAMMA) from Ceratitis capitata (Mediterranean fruit fly).